Here is a 51-residue protein sequence, read N- to C-terminus: Large ribosomal subunit protein bL33 (51 aa).

Belongs to the bacterial ribosomal protein bL33 family.

This Pseudomonas putida (strain ATCC 47054 / DSM 6125 / CFBP 8728 / NCIMB 11950 / KT2440) protein is Large ribosomal subunit protein bL33.